Reading from the N-terminus, the 555-residue chain is Urocanate hydratase (555 aa).

Residues 51-52, Gln129, 175-177, Glu195, 262-266, 272-273, and Tyr321 each bind NAD(+); these read GG, GMG, QTSAH, and YL. Cys409 is a catalytic residue. Gly491 contacts NAD(+).

Belongs to the urocanase family. It depends on NAD(+) as a cofactor.

The protein resides in the cytoplasm. It catalyses the reaction 4-imidazolone-5-propanoate = trans-urocanate + H2O. It participates in amino-acid degradation; L-histidine degradation into L-glutamate; N-formimidoyl-L-glutamate from L-histidine: step 2/3. Its function is as follows. Catalyzes the conversion of urocanate to 4-imidazolone-5-propionate. In Stenotrophomonas maltophilia (strain R551-3), this protein is Urocanate hydratase.